Consider the following 188-residue polypeptide: ADP-ribosylation factor J (188 aa).

GTP is bound by residues 34-40, 75-79, and 134-137; these read DGAGKST, DVGGQ, and NKQD.

Belongs to the small GTPase superfamily. Arf family.

The protein localises to the golgi apparatus. Its function is as follows. GTP-binding protein that may be involved in protein trafficking. May modulate vesicle budding and uncoating within the Golgi apparatus. This Dictyostelium discoideum (Social amoeba) protein is ADP-ribosylation factor J (arrJ).